The sequence spans 596 residues: MAPRILLCGDPLGRLNQLFKRVQSVSKSAGPFDALICVGQFFPDSPEILDEFLDYVEGRAQVPIPTYFTGDYGVVAPKILSTTSKKAENQGFKMDGLEVCHNLFWLRGSGKFSLHGLSVAYLSGRQSSESQFGKYSQDDVDALRALAEEPGGVDLFLTNEWPAGVTNRAAVSDIPVGISDSSCSDSTVSELVMEVKPRYHIAGSMGVFYAREPYLNAESTHVTRFIGLAQVGNKNKQKFLHALSPTPTSTMSPAELSAKPPKTTLWPYNLQDGAAESKKRPNDSDSDSQYWRYDVPKRQKSGSQGEKLCFKFVCSGSCPRGEDCHFQHNAEAREQCRRGVCLDLIIKGKCEKGPECSYKHEFQDESSIQRKPRSENANRSKECWFCLSSPSVESHLIVSVGESFYCALPKGSLVEDHILIIPIEHLPNTLVLSPEVESELSRYQNGLRNCYKSQGNDAVFFELVSKRVSHANLQVVPVPSSRARLLPNIFSLAAEKLGFKLVTKKFNDSTDGRKYLQKEYNAALGLFYVELPDGTVLSHTLEENEVFPAQFGREVLAGLLKIPDRADWRNCKISQEEEAKLAEDFKKQFQEFDPCQ.

2 disordered regions span residues Leu-243–Thr-263 and Asp-272–Trp-291. 2 C3H1-type zinc fingers span residues Ser-303–Glu-331 and Gln-335–Gln-363.

The polypeptide is Zinc finger CCCH domain-containing protein 64 (Arabidopsis thaliana (Mouse-ear cress)).